Reading from the N-terminus, the 103-residue chain is uncharacterized protein (103 aa).

This is an uncharacterized protein from Sulfolobus islandicus filamentous virus (isolate Iceland/Hveragerdi) (SIFV).